Reading from the N-terminus, the 116-residue chain is MAYTITSQCISCKLCSSVCPTGAIKIAENGQHWIDSELCTNCVDTVYTVPQCKAGCPTCDGCVKVPSDYWEGWFANYNRVIAKLTKKQDYWERWFNCYSQKFSEQLQKHQGEILGV.

One can recognise a 4Fe-4S ferredoxin-type domain in the interval 2–29; sequence AYTITSQCISCKLCSSVCPTGAIKIAEN. Positions 9, 12, 15, and 19 each coordinate iron-sulfur cluster.

The polypeptide is Ferredoxin-like protein in nif region (fdxN) (Nostoc sp. (strain PCC 7120 / SAG 25.82 / UTEX 2576)).